A 1612-amino-acid chain; its full sequence is DNA topoisomerase 2-beta (1612 aa).

Ala2 is subject to N-acetylalanine. Lys3 carries the N6-acetyllysine modification. Glycyl lysine isopeptide (Lys-Gly) (interchain with G-Cter in SUMO2) cross-links involve residues Lys21 and Lys22. Residues Asn100, Asn129, and 157 to 159 (SSN) contribute to the ATP site. Residues Lys165 and Lys166 each participate in a glycyl lysine isopeptide (Lys-Gly) (interchain with G-Cter in SUMO2) cross-link. 170–177 (GRNGYGAK) provides a ligand contact to ATP. Residues Lys216 and Lys287 each participate in a glycyl lysine isopeptide (Lys-Gly) (interchain with G-Cter in SUMO2) cross-link. The interaction with DNA stretch occupies residues 351-353 (KKK). Glycyl lysine isopeptide (Lys-Gly) (interchain with G-Cter in SUMO2) cross-links involve residues Lys355 and Lys361. An ATP-binding site is contributed by 385-387 (QTK). Glycyl lysine isopeptide (Lys-Gly) (interchain with G-Cter in SUMO2) cross-links involve residues Lys425, Lys427, and Lys434. The 118-residue stretch at 464–581 (CTLILTEGDS…SLLKHGFLEE (118 aa)) folds into the Toprim domain. 3 residues coordinate Mg(2+): Glu470, Asp550, and Asp552. Residues Lys588, Lys593, Lys623, Lys631, Lys634, Lys664, and Lys700 each participate in a glycyl lysine isopeptide (Lys-Gly) (interchain with G-Cter in SUMO2) cross-link. A Topo IIA-type catalytic domain is found at 724–1177 (IPSLVDGFKP…SPSDLWKEDL (454 aa)). Catalysis depends on Tyr814, which acts as the O-(5'-phospho-DNA)-tyrosine intermediate. The segment at 999-1008 (KLQTTLTCNS) is interaction with DNA. Residue Lys1080 forms a Glycyl lysine isopeptide (Lys-Gly) (interchain with G-Cter in SUMO2) linkage. Residues 1098–1128 (AWKEAQEKAAEEEDTQNQHDDSSSDSGTPSG) are disordered. Glycyl lysine isopeptide (Lys-Gly) (interchain with G-Cter in SUMO2) cross-links involve residues Lys1202, Lys1205, Lys1214, and Lys1215. At Ser1224 the chain carries Phosphoserine. Residues Lys1238, Lys1250, and Lys1259 each participate in a glycyl lysine isopeptide (Lys-Gly) (interchain with G-Cter in SUMO2) cross-link. Residues 1245–1586 (LLKKKKGDPD…FTSEPPALPR (342 aa)) form a disordered region. Phosphothreonine is present on Thr1280. Glycyl lysine isopeptide (Lys-Gly) (interchain with G-Cter in SUMO2) cross-links involve residues Lys1311 and Lys1315. 2 stretches are compositionally biased toward basic and acidic residues: residues 1322 to 1332 (PWSDDESKSES) and 1346 to 1358 (SLLRRAAAERPKY). Phosphoserine occurs at positions 1324, 1328, 1330, 1332, and 1346. Tyr1358 is modified (phosphotyrosine). A compositionally biased stretch (acidic residues) spans 1362–1379 (FSEEEEEDADDDDDNNDL). Ser1363 is subject to Phosphoserine. Residue Lys1385 forms a Glycyl lysine isopeptide (Lys-Gly) (interchain with G-Cter in SUMO2) linkage. Ser1387 bears the Phosphoserine mark. Thr1390 bears the Phosphothreonine mark. Phosphoserine is present on Ser1400. Tyr1408 bears the Phosphotyrosine mark. Ser1411 bears the Phosphoserine mark. Residues 1417 to 1429 (ATPEKSSHDKKSQ) are compositionally biased toward basic and acidic residues. Lys1427 is covalently cross-linked (Glycyl lysine isopeptide (Lys-Gly) (interchain with G-Cter in SUMO2)). 3 positions are modified to phosphoserine: Ser1428, Ser1439, and Ser1441. Residue Lys1443 forms a Glycyl lysine isopeptide (Lys-Gly) (interchain with G-Cter in SUMO2) linkage. Basic and acidic residues predominate over residues 1443-1453 (KSEDDSAKFDS). Ser1448, Ser1453, and Ser1460 each carry phosphoserine. Lys1477 is covalently cross-linked (Glycyl lysine isopeptide (Lys-Gly) (interchain with G-Cter in SUMO2)). The interval 1493–1499 (KAKRAPK) is interaction with PLSCR1. Residues Ser1509, Ser1511, and Ser1513 each carry the phosphoserine modification. A compositionally biased stretch (basic residues) spans 1526-1536 (GKGRGAKKRKA). Phosphoserine is present on residues Ser1537 and Ser1539. The segment covering 1550 to 1561 (KPSKTASKKPKK) has biased composition (basic residues). Thr1562 is modified (phosphothreonine). 2 positions are modified to phosphoserine: Ser1563 and Ser1568. Tyr1596 carries the post-translational modification Phosphotyrosine. At Ser1600 the chain carries Phosphoserine.

The protein belongs to the type II topoisomerase family. As to quaternary structure, homodimer. Interacts with PLSCR1 and KIAA1210. The cofactor is Mg(2+). Requires Mn(2+) as cofactor. Ca(2+) is required as a cofactor.

Its subcellular location is the nucleus. The protein resides in the nucleolus. It localises to the nucleoplasm. The catalysed reaction is ATP-dependent breakage, passage and rejoining of double-stranded DNA.. Its function is as follows. Key decatenating enzyme that alters DNA topology by binding to two double-stranded DNA molecules, generating a double-stranded break in one of the strands, passing the intact strand through the broken strand, and religating the broken strand. The protein is DNA topoisomerase 2-beta (TOP2B) of Cricetulus longicaudatus (Long-tailed dwarf hamster).